A 318-amino-acid polypeptide reads, in one-letter code: ADP-L-glycero-D-manno-heptose-6-epimerase (318 aa).

NADP(+)-binding positions include 10-11, 31-32, Lys38, Lys53, and 79-83; these read FI, DD, and EGACS. Tyr144 (proton acceptor) is an active-site residue. Lys148 is a binding site for NADP(+). Asn173 lines the substrate pocket. NADP(+)-binding residues include Val174 and Lys182. Lys182 serves as the catalytic Proton acceptor. Substrate contacts are provided by residues Ser184, His191, 205–208, Arg218, and Tyr282; that span reads FEGC.

The protein belongs to the NAD(P)-dependent epimerase/dehydratase family. HldD subfamily. As to quaternary structure, homopentamer. NADP(+) is required as a cofactor.

The catalysed reaction is ADP-D-glycero-beta-D-manno-heptose = ADP-L-glycero-beta-D-manno-heptose. It functions in the pathway nucleotide-sugar biosynthesis; ADP-L-glycero-beta-D-manno-heptose biosynthesis; ADP-L-glycero-beta-D-manno-heptose from D-glycero-beta-D-manno-heptose 7-phosphate: step 4/4. Catalyzes the interconversion between ADP-D-glycero-beta-D-manno-heptose and ADP-L-glycero-beta-D-manno-heptose via an epimerization at carbon 6 of the heptose. The polypeptide is ADP-L-glycero-D-manno-heptose-6-epimerase (Aeromonas hydrophila subsp. hydrophila (strain ATCC 7966 / DSM 30187 / BCRC 13018 / CCUG 14551 / JCM 1027 / KCTC 2358 / NCIMB 9240 / NCTC 8049)).